Here is a 245-residue protein sequence, read N- to C-terminus: 5'-nucleotidase SurE (245 aa).

Positions 8, 9, 39, and 91 each coordinate a divalent metal cation.

Belongs to the SurE nucleotidase family. A divalent metal cation is required as a cofactor.

Its subcellular location is the cytoplasm. The catalysed reaction is a ribonucleoside 5'-phosphate + H2O = a ribonucleoside + phosphate. In terms of biological role, nucleotidase that shows phosphatase activity on nucleoside 5'-monophosphates. The polypeptide is 5'-nucleotidase SurE (Janthinobacterium sp. (strain Marseille) (Minibacterium massiliensis)).